The sequence spans 160 residues: Xanthine-guanine phosphoribosyltransferase (160 aa).

Residues 41-42 (RG) and 93-101 (DDLVDTGRT) contribute to the 5-phospho-alpha-D-ribose 1-diphosphate site. Residue aspartate 94 coordinates Mg(2+). Positions 97 and 140 each coordinate guanine. Residues aspartate 97 and isoleucine 140 each coordinate xanthine. GMP-binding positions include 97–101 (DTGRT) and 139–140 (WI).

This sequence belongs to the purine/pyrimidine phosphoribosyltransferase family. XGPT subfamily. In terms of assembly, homotetramer. Mg(2+) serves as cofactor.

The protein localises to the cell inner membrane. The enzyme catalyses GMP + diphosphate = guanine + 5-phospho-alpha-D-ribose 1-diphosphate. The catalysed reaction is XMP + diphosphate = xanthine + 5-phospho-alpha-D-ribose 1-diphosphate. It catalyses the reaction IMP + diphosphate = hypoxanthine + 5-phospho-alpha-D-ribose 1-diphosphate. It participates in purine metabolism; GMP biosynthesis via salvage pathway; GMP from guanine: step 1/1. Its pathway is purine metabolism; XMP biosynthesis via salvage pathway; XMP from xanthine: step 1/1. Purine salvage pathway enzyme that catalyzes the transfer of the ribosyl-5-phosphate group from 5-phospho-alpha-D-ribose 1-diphosphate (PRPP) to the N9 position of the 6-oxopurines guanine and xanthine to form the corresponding ribonucleotides GMP (guanosine 5'-monophosphate) and XMP (xanthosine 5'-monophosphate), with the release of PPi. To a lesser extent, also acts on hypoxanthine. The sequence is that of Xanthine-guanine phosphoribosyltransferase from Desulfotalea psychrophila (strain LSv54 / DSM 12343).